The sequence spans 306 residues: Methionyl-tRNA formyltransferase (306 aa).

A (6S)-5,6,7,8-tetrahydrofolate-binding site is contributed by 110-113 (SLLP).

Belongs to the Fmt family.

It catalyses the reaction L-methionyl-tRNA(fMet) + (6R)-10-formyltetrahydrofolate = N-formyl-L-methionyl-tRNA(fMet) + (6S)-5,6,7,8-tetrahydrofolate + H(+). In terms of biological role, attaches a formyl group to the free amino group of methionyl-tRNA(fMet). The formyl group appears to play a dual role in the initiator identity of N-formylmethionyl-tRNA by promoting its recognition by IF2 and preventing the misappropriation of this tRNA by the elongation apparatus. This is Methionyl-tRNA formyltransferase from Brucella melitensis biotype 2 (strain ATCC 23457).